The chain runs to 571 residues: 2-succinyl-5-enolpyruvyl-6-hydroxy-3-cyclohexene-1-carboxylate synthase (571 aa).

It belongs to the TPP enzyme family. MenD subfamily. In terms of assembly, homodimer. Requires Mg(2+) as cofactor. It depends on Mn(2+) as a cofactor. Thiamine diphosphate serves as cofactor.

The enzyme catalyses isochorismate + 2-oxoglutarate + H(+) = 5-enolpyruvoyl-6-hydroxy-2-succinyl-cyclohex-3-ene-1-carboxylate + CO2. Its pathway is quinol/quinone metabolism; 1,4-dihydroxy-2-naphthoate biosynthesis; 1,4-dihydroxy-2-naphthoate from chorismate: step 2/7. It functions in the pathway quinol/quinone metabolism; menaquinone biosynthesis. Its function is as follows. Catalyzes the thiamine diphosphate-dependent decarboxylation of 2-oxoglutarate and the subsequent addition of the resulting succinic semialdehyde-thiamine pyrophosphate anion to isochorismate to yield 2-succinyl-5-enolpyruvyl-6-hydroxy-3-cyclohexene-1-carboxylate (SEPHCHC). The chain is 2-succinyl-5-enolpyruvyl-6-hydroxy-3-cyclohexene-1-carboxylate synthase from Vibrio parahaemolyticus serotype O3:K6 (strain RIMD 2210633).